The primary structure comprises 321 residues: 2-oxoglutarate-dependent dioxygenase frbH (321 aa).

Positions 77-97 (SRNSDTHGYEPVATSTGAQDD) are disordered. The 105-residue stretch at 169–273 (ESLSTLSMFR…RFSIAYFLRA (105 aa)) folds into the Fe2OG dioxygenase domain. Positions 194, 196, and 251 each coordinate Fe cation. A 2-oxoglutarate-binding site is contributed by Arg-264.

The protein belongs to the iron/ascorbate-dependent oxidoreductase family.

It functions in the pathway antifungal biosynthesis. 2-oxoglutarate-dependent dioxygenase; part of the gene cluster that mediates the biosynthesis of the antifungal antibiotic FR901469, an inhibitor of beta-1,3-glucansynthase, exerting antifungal activity against the pathogenes Candida albicans and Aspergillus fumigatus. FR901469 is a cyclic depsipeptide containing 12 amino acid residues and a fatty acid chain. The NRPS frbI contains 12 modules responsible for the formation of the depsipeptide backbone which is denoted as Acyl-Thr-Ala-Tyr-Val-4OHPro-Thr-Thr-3OHPro-threo3OHGln-Gly-Thr-Orn-OH (C71H116N14O23). The PKS frbB is probably involved in the production of the hydrocarbon chain, and the acyl-CoA ligase frbC might be involved in the transport of the chain to the peptide ptoduct of frbI. Because FR901469 contains 3 hydroxylated amino acid residues, the 3 oxygenases frbA, frbH, and frbJ might be participating in amino acid hydroxylation. As no thioesterase domains were detected in frbI or frbB, the thioesterases frbD and frbE may instead release and cyclize the products of the NRPS and PKS, respectively. The chain is 2-oxoglutarate-dependent dioxygenase frbH from Dothideomycetidae sp. (strain 11243) (Fungal sp. (strain No.11243)).